A 297-amino-acid polypeptide reads, in one-letter code: Large ribosomal subunit protein uL15m (297 aa).

The transit peptide at 1–21 (MSGNGVHGVHGALQLLRSLPK) directs the protein to the mitochondrion. Positions 23–69 (SLANLRPNPGSKKPERRRGRGRYRGRKCGRGHKGERQRGNRPRLGFE) are disordered. Residues 36–53 (PERRRGRGRYRGRKCGRG) are compositionally biased toward basic residues.

Belongs to the universal ribosomal protein uL15 family. In terms of assembly, component of the mitochondrial ribosome large subunit (39S) which comprises a 16S rRNA and about 50 distinct proteins.

Its subcellular location is the mitochondrion. The chain is Large ribosomal subunit protein uL15m (MRPL15) from Gallus gallus (Chicken).